The sequence spans 346 residues: MSTPAADGFRMPAEWTPHERTWMAWPGPNPTFDHPDDLAESCRAWADVARAIRRFEPVTVVCGPGRSAEARDLLGPGIDTVERDLDDAWMRDIGPTFLTDGKGGLAAVDWTFNGWGAQSWARWEHDAKIAAYVGDLAGAKTYASKLVNEGGAIHVDGEGTVLLTETVQLGAERNPGWTREQVETEIHAHLGTSKAIWLPRGLTGDYPPHGFGTLGHVDIVAAFARPGVVVAHHQPDPAHPDHEVSKEVIGLLKAATDAHGRRIEVVEVPAPTVLEADGHWADYSYINHYLCNGGVVLCGFDDPRDETAAGIFRRLFPERTVTLVDARTIFSGGGGIHCITQQQPKN.

C338 functions as the Amidino-cysteine intermediate in the catalytic mechanism.

Belongs to the agmatine deiminase family.

The enzyme catalyses agmatine + H2O = N-carbamoylputrescine + NH4(+). The protein is Putative agmatine deiminase of Streptomyces avermitilis (strain ATCC 31267 / DSM 46492 / JCM 5070 / NBRC 14893 / NCIMB 12804 / NRRL 8165 / MA-4680).